We begin with the raw amino-acid sequence, 171 residues long: PIDD1 alternative open reading frame protein (171 aa).

Disordered regions lie at residues 1 to 22 and 76 to 156; these read MSGL…RAGG and ILAS…LCPA. Low complexity predominate over residues 84–99; that stretch reads GPSAAGGHPGPAASEP.

As to quaternary structure, interacts with calpain-2 catalytic subunit CAPN2. Post-translationally, cleaved in vitro following UV irradiation to induce caspase-mediated apoptosis and this cleavage is inhibited by a broad-spectrum caspase inhibitor.

It is found in the cytoplasm. Its subcellular location is the cytoskeleton. This Homo sapiens (Human) protein is PIDD1 alternative open reading frame protein.